The chain runs to 122 residues: Small ribosomal subunit protein bS16 (122 aa).

Residues 87–122 (AQSNPKKALPKKKAQERAAASAAAAEKAAAAAAPEA) form a disordered region. The span at 103 to 122 (RAAASAAAAEKAAAAAAPEA) shows a compositional bias: low complexity.

It belongs to the bacterial ribosomal protein bS16 family.

The protein is Small ribosomal subunit protein bS16 of Methylocella silvestris (strain DSM 15510 / CIP 108128 / LMG 27833 / NCIMB 13906 / BL2).